The following is a 37-amino-acid chain: Large ribosomal subunit protein bL36c (37 aa).

It belongs to the bacterial ribosomal protein bL36 family.

It is found in the plastid. The protein localises to the chloroplast. This is Large ribosomal subunit protein bL36c from Chloranthus spicatus (Chulantree).